Reading from the N-terminus, the 363-residue chain is Protein-arginine kinase (363 aa).

The Phosphagen kinase C-terminal domain occupies 24–255 (IVLSSRIRLA…QQLIAQERAA (232 aa)). Residues 27–31 (SSRIR), H92, R126, 177–181 (RASVM), and 208–213 (RGTYGE) contribute to the ATP site. The RDXXRA motif of the pArg binding pocket involved in allosteric regulation motif lies at 338–343 (RDVRRA).

It belongs to the ATP:guanido phosphotransferase family.

The enzyme catalyses L-arginyl-[protein] + ATP = N(omega)-phospho-L-arginyl-[protein] + ADP + H(+). Its activity is regulated as follows. Appears to be allosterically activated by the binding of pArg-containing polypeptides to the pArg-binding pocket localized in the C-terminal domain of McsB. Catalyzes the specific phosphorylation of arginine residues in a large number of proteins. Is part of the bacterial stress response system. Protein arginine phosphorylation has a physiologically important role and is involved in the regulation of many critical cellular processes, such as protein homeostasis, motility, competence, and stringent and stress responses, by regulating gene expression and protein activity. This Geobacillus kaustophilus (strain HTA426) protein is Protein-arginine kinase.